Here is a 105-residue protein sequence, read N- to C-terminus: Small ribosomal subunit protein uS14m (105 aa).

This sequence belongs to the universal ribosomal protein uS14 family. In terms of assembly, component of the mitochondrial small ribosomal subunit (mt-SSU). Mature yeast 74S mitochondrial ribosomes consist of a small (37S) and a large (54S) subunit. The 37S small subunit contains a 15S ribosomal RNA (15S mt-rRNA) and at least 32 different proteins. The 54S large subunit contains a 21S rRNA (21S mt-rRNA) and at least 45 different proteins.

The protein resides in the mitochondrion. Its function is as follows. Component of the mitochondrial ribosome (mitoribosome), a dedicated translation machinery responsible for the synthesis of mitochondrial genome-encoded proteins, including at least some of the essential transmembrane subunits of the mitochondrial respiratory chain. The mitoribosomes are attached to the mitochondrial inner membrane and translation products are cotranslationally integrated into the membrane. The protein is Small ribosomal subunit protein uS14m (mrp2) of Schizosaccharomyces pombe (strain 972 / ATCC 24843) (Fission yeast).